The following is a 301-amino-acid chain: Bifunctional dTDP-4-dehydrorhamnose 3,5-epimerase/dTDP-4-dehydrorhamnose reductase (301 aa).

Residues 23–24 (WI), 69–71 (GVT), and tyrosine 111 each bind NADPH.

This sequence belongs to the dTDP-4-dehydrorhamnose reductase family. In terms of tissue distribution, expressed in roots, leaves, stems and flowers.

It catalyses the reaction dTDP-4-dehydro-6-deoxy-alpha-D-glucose = dTDP-4-dehydro-beta-L-rhamnose. It carries out the reaction dTDP-beta-L-rhamnose + NADP(+) = dTDP-4-dehydro-beta-L-rhamnose + NADPH + H(+). It functions in the pathway carbohydrate biosynthesis; dTDP-L-rhamnose biosynthesis. Functionally, bifunctional enzyme involved in dTDP-beta-L-rhamnose biosynthesis. Catalyzes the epimerization of the C3' and C5'positions of dTDP-6-deoxy-4-keto-alpha-D-glucose to form dTDP-4-keto-beta-L-rhamnose and its reduction to yield dTDP-beta-L-rhamnose. Can form UDP-beta-L-rhamnose from UDP-6-deoxy-4-keto-alpha-D-glucose, but cannot convert GDP-4-dehydro-6-deoxy-D-mannose to GDP-fucose. The sequence is that of Bifunctional dTDP-4-dehydrorhamnose 3,5-epimerase/dTDP-4-dehydrorhamnose reductase from Arabidopsis thaliana (Mouse-ear cress).